We begin with the raw amino-acid sequence, 416 residues long: Multifunctional CCA protein (416 aa).

Residues Gly8 and Arg11 each contribute to the ATP site. The CTP site is built by Gly8 and Arg11. Residues Asp21 and Asp23 each coordinate Mg(2+). Residues Arg91, Arg137, and Arg140 each coordinate ATP. CTP contacts are provided by Arg91, Arg137, and Arg140. Positions 228 to 329 (TGLHTMMVLA…IKLFDKADFW (102 aa)) constitute an HD domain.

It belongs to the tRNA nucleotidyltransferase/poly(A) polymerase family. Bacterial CCA-adding enzyme type 1 subfamily. In terms of assembly, monomer. Can also form homodimers and oligomers. Mg(2+) serves as cofactor. It depends on Ni(2+) as a cofactor.

It catalyses the reaction a tRNA precursor + 2 CTP + ATP = a tRNA with a 3' CCA end + 3 diphosphate. It carries out the reaction a tRNA with a 3' CCA end + 2 CTP + ATP = a tRNA with a 3' CCACCA end + 3 diphosphate. In terms of biological role, catalyzes the addition and repair of the essential 3'-terminal CCA sequence in tRNAs without using a nucleic acid template. Adds these three nucleotides in the order of C, C, and A to the tRNA nucleotide-73, using CTP and ATP as substrates and producing inorganic pyrophosphate. tRNA 3'-terminal CCA addition is required both for tRNA processing and repair. Also involved in tRNA surveillance by mediating tandem CCA addition to generate a CCACCA at the 3' terminus of unstable tRNAs. While stable tRNAs receive only 3'-terminal CCA, unstable tRNAs are marked with CCACCA and rapidly degraded. This chain is Multifunctional CCA protein, found in Shewanella sp. (strain MR-4).